The sequence spans 144 residues: Large ribosomal subunit protein uL15 (144 aa).

The disordered stretch occupies residues 1–58 (MRLNELAPEPGSRPSAKRVGRGIGSGLGKTGGRGHKGLKSRSGGSVAPGFEGGQQPLA). The segment covering 21–31 (RGIGSGLGKTG) has biased composition (gly residues).

Belongs to the universal ribosomal protein uL15 family. In terms of assembly, part of the 50S ribosomal subunit.

In terms of biological role, binds to the 23S rRNA. The polypeptide is Large ribosomal subunit protein uL15 (Marinobacter nauticus (strain ATCC 700491 / DSM 11845 / VT8) (Marinobacter aquaeolei)).